Here is a 148-residue protein sequence, read N- to C-terminus: tRNA-specific adenosine deaminase (148 aa).

Residues 1-116 (MEQALKQARL…SNLRYFNSSA (116 aa)) form the CMP/dCMP-type deaminase domain. Residue His48 coordinates Zn(2+). The active-site Proton donor is the Glu50. The Zn(2+) site is built by Cys78 and Cys81.

It belongs to the cytidine and deoxycytidylate deaminase family. As to quaternary structure, homodimer. Zn(2+) is required as a cofactor.

The catalysed reaction is adenosine(34) in tRNA + H2O + H(+) = inosine(34) in tRNA + NH4(+). In terms of biological role, catalyzes the deamination of adenosine to inosine at the wobble position 34 of tRNA(Arg2). The chain is tRNA-specific adenosine deaminase from Rickettsia typhi (strain ATCC VR-144 / Wilmington).